We begin with the raw amino-acid sequence, 197 residues long: Holliday junction branch migration complex subunit RuvA (197 aa).

Residues 1-63 (MYAYLKGIIT…EDAHLLYGFR (63 aa)) are domain I. The domain II stretch occupies residues 64–142 (SEDEKKLFLS…VAGDDLPAKV (79 aa)). The flexible linker stretch occupies residues 143–147 (AVQAS). The tract at residues 148-197 (AENQELEEAMEAMLALGYKATELKKIKKFFEGTTDTAENYIKSALKMLVK) is domain III.

This sequence belongs to the RuvA family. As to quaternary structure, homotetramer. Forms an RuvA(8)-RuvB(12)-Holliday junction (HJ) complex. HJ DNA is sandwiched between 2 RuvA tetramers; dsDNA enters through RuvA and exits via RuvB. An RuvB hexamer assembles on each DNA strand where it exits the tetramer. Each RuvB hexamer is contacted by two RuvA subunits (via domain III) on 2 adjacent RuvB subunits; this complex drives branch migration. In the full resolvosome a probable DNA-RuvA(4)-RuvB(12)-RuvC(2) complex forms which resolves the HJ.

The protein localises to the cytoplasm. The RuvA-RuvB-RuvC complex processes Holliday junction (HJ) DNA during genetic recombination and DNA repair, while the RuvA-RuvB complex plays an important role in the rescue of blocked DNA replication forks via replication fork reversal (RFR). RuvA specifically binds to HJ cruciform DNA, conferring on it an open structure. The RuvB hexamer acts as an ATP-dependent pump, pulling dsDNA into and through the RuvAB complex. HJ branch migration allows RuvC to scan DNA until it finds its consensus sequence, where it cleaves and resolves the cruciform DNA. The sequence is that of Holliday junction branch migration complex subunit RuvA from Streptococcus pneumoniae serotype 19F (strain G54).